A 124-amino-acid polypeptide reads, in one-letter code: Small ribosomal subunit protein uS12 (124 aa).

The residue at position 89 (D89) is a 3-methylthioaspartic acid. A disordered region spans residues Q105 to S124. Residues K108–G118 show a composition bias toward basic residues.

It belongs to the universal ribosomal protein uS12 family. In terms of assembly, part of the 30S ribosomal subunit. Contacts proteins S8 and S17. May interact with IF1 in the 30S initiation complex.

Its function is as follows. With S4 and S5 plays an important role in translational accuracy. Functionally, interacts with and stabilizes bases of the 16S rRNA that are involved in tRNA selection in the A site and with the mRNA backbone. Located at the interface of the 30S and 50S subunits, it traverses the body of the 30S subunit contacting proteins on the other side and probably holding the rRNA structure together. The combined cluster of proteins S8, S12 and S17 appears to hold together the shoulder and platform of the 30S subunit. This is Small ribosomal subunit protein uS12 (rpsL) from Mycolicibacterium smegmatis (strain ATCC 700084 / mc(2)155) (Mycobacterium smegmatis).